The following is a 346-amino-acid chain: Acetylserotonin O-methyltransferase (346 aa).

Residues Tyr148, Trp165, Asp211, 236–238 (GDF), and Lys253 contribute to the S-adenosyl-L-methionine site. His256 (proton donor/acceptor) is an active-site residue. Positions 257, 303, and 307 each coordinate substrate.

This sequence belongs to the class I-like SAM-binding methyltransferase superfamily. Cation-independent O-methyltransferase family. Homodimer. As to expression, expressed in pineal gland and retina.

The catalysed reaction is N-acetylserotonin + S-adenosyl-L-methionine = melatonin + S-adenosyl-L-homocysteine + H(+). The protein operates within aromatic compound metabolism; melatonin biosynthesis; melatonin from serotonin: step 1/2. Catalyzes the transfer of a methyl group onto N-acetylserotonin, producing melatonin (N-acetyl-5-methoxytryptamine). This Gallus gallus (Chicken) protein is Acetylserotonin O-methyltransferase (ASMT).